Reading from the N-terminus, the 416-residue chain is Cotranscriptional regulator ARB2A (416 aa).

An N-terminal signal peptide occupies residues 1-18; it reads MSISLSSLILLPIWINMA. A disordered region spans residues 208 to 247; the sequence is KPKIHVQSSSDSSDEPAEKRERKDKVSKETKKRRDFYEKY. Residues 223–236 show a composition bias toward basic and acidic residues; it reads PAEKRERKDKVSKE. Catalysis depends on serine 293, which acts as the Nucleophile. The short motif at 413 to 416 is the Prevents secretion from ER element; it reads HEEL.

It belongs to the ARB2A family. In terms of assembly, interacts with AGO2. Found in a complex, composed of AGO2, CHD7 and ARB2A.

It localises to the nucleus. The protein localises to the cytoplasm. Its subcellular location is the endoplasmic reticulum. Its function is as follows. Plays a role in the regulation of alternative splicing, by interacting with AGO2 and CHD7. Seems to be required for stabilizing protein-protein interactions at the chromatin-spliceosome interface. May have hydrolase activity. In Homo sapiens (Human), this protein is Cotranscriptional regulator ARB2A.